The primary structure comprises 341 residues: Protein-glutamate methylesterase/protein-glutamine glutaminase 2 (341 aa).

The Response regulatory domain maps to 11–126 (RVLVADDSEL…DLGEYGRLIR (116 aa)). At Asp62 the chain carries 4-aspartylphosphate. In terms of domain architecture, CheB-type methylesterase spans 152 to 341 (PARAARVEVV…IPRALRELTR (190 aa)). Residues Ser166, His193, and Asp285 contribute to the active site.

This sequence belongs to the CheB family. Post-translationally, phosphorylated by CheA. Phosphorylation of the N-terminal regulatory domain activates the methylesterase activity.

The protein localises to the cytoplasm. It catalyses the reaction [protein]-L-glutamate 5-O-methyl ester + H2O = L-glutamyl-[protein] + methanol + H(+). It carries out the reaction L-glutaminyl-[protein] + H2O = L-glutamyl-[protein] + NH4(+). In terms of biological role, involved in chemotaxis. Part of a chemotaxis signal transduction system that modulates chemotaxis in response to various stimuli. Catalyzes the demethylation of specific methylglutamate residues introduced into the chemoreceptors (methyl-accepting chemotaxis proteins or MCP) by CheR. Also mediates the irreversible deamidation of specific glutamine residues to glutamic acid. This chain is Protein-glutamate methylesterase/protein-glutamine glutaminase 2, found in Anaeromyxobacter dehalogenans (strain 2CP-C).